A 624-amino-acid polypeptide reads, in one-letter code: (-)-beta-phellandrene synthase 2, chloroplastic (624 aa).

The transit peptide at 1–47 directs the protein to the chloroplast; it reads MALVSVAPLVSMRRSLFSSPYELKSIDKTIPNLVMCRKRMLGRPSIR. Residues aspartate 375, aspartate 379, and aspartate 527 each coordinate Mg(2+). Residues 375 to 379 carry the DDXXD motif motif; that stretch reads DDIYD.

Belongs to the terpene synthase family. Tpsd subfamily. Requires Mg(2+) as cofactor. Mn(2+) serves as cofactor.

Its subcellular location is the plastid. The protein localises to the chloroplast. It carries out the reaction (2E)-geranyl diphosphate = (-)-beta-phellandrene + diphosphate. It functions in the pathway terpene metabolism; oleoresin biosynthesis. Its pathway is secondary metabolite biosynthesis; terpenoid biosynthesis. In terms of biological role, monoterpene synthase (TPS) involved in the biosynthesis of monoterpene natural products included in conifer oleoresin secretions and volatile emissions; these compounds contribute to biotic and abiotic stress defense against herbivores and pathogens. Catalyzes the conversion of (2E)-geranyl diphosphate (GPP) to (-)-beta-phellandrene. The polypeptide is (-)-beta-phellandrene synthase 2, chloroplastic (Pinus contorta (Shore pine)).